We begin with the raw amino-acid sequence, 651 residues long: MSAASLYPVHPEAVARTFTDEATYKTMYQQSVVNPDGFWREQAQRIDWIKPFEKVKQTSFDDHHVDIKWFADGTLNVSHNCLDRHLAERGDQVAIIWEGDDPADHQEITYRQLHEQVCKFANALRGQDVHRGDVVTIYMPMIPEAVVAMLACTRIGAIHSVVFGGFSPEALAGRIIDCKSKVVITADEGVRGGKRTPLKANVDDALTNPETSSVQKIIVCKRTGAEIKWNQHRDVWYDDLMKVAGSTCAPKEMGAEDPLFILYTSGSTGKPKGVLHTTGGYLVYASLTHERVFDYRPGEVYWCTADIGWVTGHTYIVYGPLANGATTILFEGVPNYPDVTRVAKIIDKHKVNILYTAPTAIRAMMAEGKAAVAGADGSSLRLLGSVGEPINPEAWQWYYETVGQSRCPIVDTWWQTETGACLMTPLPGAHAMKPGSAAKPFFGVVPALVDNLGNLIEGAAEGNLVILDSWPGQARTLFGDHDRFVDTYFKTFKGMYFTGDGARRDEDGYYWITGRVDDVLNVSGHRMGTAEVESAMVAHPKVAEAAVVGMQHDIKGQGIYVYVTLNSGVEPSEALRQELKQWVRREIGPIATPDVIQWAPGLPKTRSGKIMRRILRKIAAAEYDTLGDISTLADPGVVQHLIETHRSMQAA.

CoA is bound by residues 191 to 194 (RGGK), Thr311, and Asn335. ATP is bound by residues 387 to 389 (GEP), 411 to 416 (DTWWQT), Asp500, and Arg515. Ser523 is a binding site for CoA. Residue Arg526 coordinates ATP. Residues Val537, His539, and Val542 each contribute to the Mg(2+) site. CoA is bound at residue Arg584. An N6-acetyllysine modification is found at Lys609.

The protein belongs to the ATP-dependent AMP-binding enzyme family. Mg(2+) is required as a cofactor. In terms of processing, acetylated. Deacetylation by the SIR2-homolog deacetylase activates the enzyme.

The enzyme catalyses acetate + ATP + CoA = acetyl-CoA + AMP + diphosphate. Catalyzes the conversion of acetate into acetyl-CoA (AcCoA), an essential intermediate at the junction of anabolic and catabolic pathways. AcsA undergoes a two-step reaction. In the first half reaction, AcsA combines acetate with ATP to form acetyl-adenylate (AcAMP) intermediate. In the second half reaction, it can then transfer the acetyl group from AcAMP to the sulfhydryl group of CoA, forming the product AcCoA. The protein is Acetyl-coenzyme A synthetase 1 of Pseudomonas aeruginosa (strain ATCC 15692 / DSM 22644 / CIP 104116 / JCM 14847 / LMG 12228 / 1C / PRS 101 / PAO1).